The sequence spans 516 residues: Probable cyclic di-GMP phosphodiesterase PdeB (516 aa).

A run of 2 helical transmembrane segments spans residues 6-26 and 242-262; these read LVGL…GLSI and QVFI…MFVL. Positions 268–516 constitute an EAL domain; it reads IQSPHHRLQD…DFLRWAEQHL (249 aa).

It is found in the cell inner membrane. It carries out the reaction 3',3'-c-di-GMP + H2O = 5'-phosphoguanylyl(3'-&gt;5')guanosine + H(+). Its function is as follows. Phosphodiesterase (PDE) that catalyzes the hydrolysis of cyclic-di-GMP (c-di-GMP) to 5'-pGpG. This chain is Probable cyclic di-GMP phosphodiesterase PdeB, found in Escherichia coli (strain K12).